Consider the following 557-residue polypeptide: ABC1 family protein MCP2 homolog (557 aa).

The transit peptide at 1-33 directs the protein to the mitochondrion; it reads MFSRFSWPRITRCFRSYPKKKSSCISFTHHARE. Residues 34-39 lie on the Mitochondrial matrix side of the membrane; the sequence is HTNFKK. The helical transmembrane segment at 40–56 threads the bilayer; it reads PAVVGASITLMASVALV. Topologically, residues 57–557 are mitochondrial intermembrane; that stretch reads DFDPVKHAGV…NYFYYKHMYL (501 aa).

The protein belongs to the protein kinase superfamily. ADCK protein kinase family.

Its subcellular location is the mitochondrion inner membrane. Involved in mitochondrial lipid homeostasis. This Schizosaccharomyces pombe (strain 972 / ATCC 24843) (Fission yeast) protein is ABC1 family protein MCP2 homolog.